We begin with the raw amino-acid sequence, 358 residues long: Protein-glutamate methylesterase/protein-glutamine glutaminase 1 (358 aa).

Residues 7–124 (SVLLVDDSAV…KNFLIDSAAE (118 aa)) form the Response regulatory domain. At D58 the chain carries 4-aspartylphosphate. The CheB-type methylesterase domain occupies 170–358 (AQTTERIVAI…QEIHQAILHR (189 aa)). Active-site residues include S182, H208, and D304.

Belongs to the CheB family. Phosphorylated by CheA. Phosphorylation of the N-terminal regulatory domain activates the methylesterase activity.

It localises to the cytoplasm. The catalysed reaction is [protein]-L-glutamate 5-O-methyl ester + H2O = L-glutamyl-[protein] + methanol + H(+). It carries out the reaction L-glutaminyl-[protein] + H2O = L-glutamyl-[protein] + NH4(+). Involved in chemotaxis. Part of a chemotaxis signal transduction system that modulates chemotaxis in response to various stimuli. Catalyzes the demethylation of specific methylglutamate residues introduced into the chemoreceptors (methyl-accepting chemotaxis proteins or MCP) by CheR. Also mediates the irreversible deamidation of specific glutamine residues to glutamic acid. The chain is Protein-glutamate methylesterase/protein-glutamine glutaminase 1 from Pseudomonas savastanoi pv. phaseolicola (strain 1448A / Race 6) (Pseudomonas syringae pv. phaseolicola (strain 1448A / Race 6)).